A 494-amino-acid chain; its full sequence is Inositol-trisphosphate 3-kinase homolog (494 aa).

ATP contacts are provided by residues Ser-206, Lys-218, 260-262, and Asp-276; that span reads EDL. Substrate-binding positions include Lys-278 and 322–329; that span reads KLRYMQFR. Residues Lys-346 and Asp-426 each coordinate ATP. Residue Lys-429 participates in substrate binding.

This sequence belongs to the inositol phosphokinase (IPK) family. In terms of tissue distribution, expressed in spermatheca.

The catalysed reaction is 1D-myo-inositol 1,4,5-trisphosphate + ATP = 1D-myo-inositol 1,3,4,5-tetrakisphosphate + ADP + H(+). With respect to regulation, unlike mammalian IP3K, may not be regulated by calmodulin. In terms of biological role, probably by regulating inositol 1,4,5-trisphosphate levels, negatively regulates posterior body wall muscle contractions required for defecation and let-23 signaling pathway that controls spermathecal dilation and ovulation. May also regulate ovulation downstream of actin cross-linker fln-1. The protein is Inositol-trisphosphate 3-kinase homolog of Caenorhabditis elegans.